The chain runs to 185 residues: Ribosome-recycling factor (185 aa).

The protein belongs to the RRF family.

Its subcellular location is the cytoplasm. Responsible for the release of ribosomes from messenger RNA at the termination of protein biosynthesis. May increase the efficiency of translation by recycling ribosomes from one round of translation to another. The polypeptide is Ribosome-recycling factor (Ehrlichia chaffeensis (strain ATCC CRL-10679 / Arkansas)).